Consider the following 232-residue polypeptide: MENQPKLNSSKEVIAFLAERFPHCFSAEGEARPLKIGIFQDLVDRVAGEMNLSKTQLRSALRLYTSSWRYLYGVKPGATRVDLDGNPCGELDEQHVEHARKQLEEAKARVQAQRAEQQAKKREAAAAAGEKEDAPRRERKPRPTTPRRKEGAERKPRAQKPVEKAPKTAKAPREEQHTPVSDISALTVGQALKVKAGQNAMDATVLEITKDGVRVQLNSGMSLIVRAEHLVF.

A disordered region spans residues 105-182; the sequence is EAKARVQAQR…REEQHTPVSD (78 aa). Residues 117–136 show a composition bias toward basic and acidic residues; it reads QQAKKREAAAAAGEKEDAPR. Residues 137–146 are compositionally biased toward basic residues; the sequence is RERKPRPTTP. Residues 147 to 177 are compositionally biased toward basic and acidic residues; sequence RRKEGAERKPRAQKPVEKAPKTAKAPREEQH.

It belongs to the ProQ family.

The protein resides in the cytoplasm. In terms of biological role, RNA chaperone with significant RNA binding, RNA strand exchange and RNA duplexing activities. May regulate ProP activity through an RNA-based, post-transcriptional mechanism. The sequence is that of RNA chaperone ProQ from Shigella dysenteriae serotype 1 (strain Sd197).